We begin with the raw amino-acid sequence, 262 residues long: 2-keto-4-pentenoate hydratase (262 aa).

Belongs to the hydratase/decarboxylase family. MhpD subfamily. It depends on a divalent metal cation as a cofactor.

It catalyses the reaction (S)-4-hydroxy-2-oxopentanoate = (2Z)-2-hydroxypenta-2,4-dienoate + H2O. Its pathway is aromatic compound metabolism; 3-phenylpropanoate degradation. Functionally, catalyzes the conversion of 2-hydroxypentadienoic acid (enolic form of 2-oxopent-4-enoate) to 4-hydroxy-2-ketopentanoic acid. The polypeptide is 2-keto-4-pentenoate hydratase (Burkholderia vietnamiensis (strain G4 / LMG 22486) (Burkholderia cepacia (strain R1808))).